The sequence spans 981 residues: uncharacterized protein (981 aa).

Disordered regions lie at residues 65–133 (NIDN…SNNS), 149–463 (SSNS…NKIE), 491–580 (SNNI…DSPL), 592–834 (EQTN…LNQV), and 861–891 (VQNDTNSSPISQQLSTSSSPFKSTGGSNDGN). The span at 75–88 (SSDDDDDDDDDDDY) shows a compositional bias: acidic residues. Low complexity-rich tracts occupy residues 89-133 (NNNN…SNNS), 149-158 (SSNSINNNDN), and 170-181 (SAKTTSSLTSSK). Positions 182-195 (RSLDSRNRNRDRSY) are enriched in basic and acidic residues. Over residues 196–206 (TRSRSRSRSRS) the composition is skewed to basic residues. A compositionally biased stretch (low complexity) spans 207–227 (YSRGFSSLSRSRSRSRSISSR). Residues 228–269 (SRSRSRSRRSRSRSSRSRSRSRSKSKSKSRRSRSRSRSRRSR) show a composition bias toward basic residues. Basic and acidic residues predominate over residues 270–292 (SRSDSRSRSDSRGRSRSRSDSRK). Over residues 314–358 (SSKRHQNSRKRNRSYSRSRTRSWSRSRTRSRSRRRYGGRTFRSPR) the composition is skewed to basic residues. Residues 359–452 (RSRDDSRDRG…SQSPHNEKNK (94 aa)) are compositionally biased toward basic and acidic residues. Residues 491-553 (SNNINNNNIK…SHNNTNGNVN (63 aa)) are compositionally biased toward low complexity. 2 stretches are compositionally biased toward polar residues: residues 554-576 (GVSKTTSSPASDNSTPENISTDL) and 605-622 (ESNNNGNDRFKTKCSSTE). Over residues 623–634 (NENKNRENEKNN) the composition is skewed to basic and acidic residues. Low complexity-rich tracts occupy residues 635–820 (SENS…NNNS) and 867–891 (SSPISQQLSTSSSPFKSTGGSNDGN).

This is an uncharacterized protein from Dictyostelium discoideum (Social amoeba).